Here is a 419-residue protein sequence, read N- to C-terminus: Gustatory receptor for bitter taste 93a (419 aa).

At 1-55 the chain is on the cytoplasmic side; the sequence is MFSSSSAMTGKRAESWSRLLLLWLYRCARGLLVLSSSLDRDKLQLKATKQGSRNR. A helical transmembrane segment spans residues 56 to 76; it reads FLHILWRCIVVMIYAGLWPML. Residues 77–90 are Extracellular-facing; the sequence is TSAVIGKRLESYAD. Residues 91 to 111 form a helical membrane-spanning segment; it reads VLALAQSMSVSILAVISFVIQ. Residues 112 to 145 lie on the Cytoplasmic side of the membrane; sequence ARGENQFREVLNRYLALYQRICLTTRLRHLFPTK. A helical membrane pass occupies residues 146-166; sequence FVVFFLLKLFFTLCGCFHEII. The Extracellular segment spans residues 167 to 184; that stretch reads PLFENSHFDDISQMVGTG. A helical transmembrane segment spans residues 185 to 205; the sequence is FGIYMWLGTLCVLDACFLGFL. At 206–277 the chain is on the cytoplasmic side; that stretch reads VSGILYEHMA…NSFRRILQWQ (72 aa). The helical transmembrane segment at 278–298 threads the bilayer; the sequence is ILFYIYLNFINICLMLYQYIL. At 299–305 the chain is on the extracellular side; sequence HFLNDDE. Residues 306–326 traverse the membrane as a helical segment; that stretch reads VVFVSIVMAFVKLANLVLLMM. Residues 327 to 383 are Cytoplasmic-facing; sequence CADYTVRQSEVPKKLPLDIVCSDMDERWDKSVETFLGQLQTQRLEIKVLGFFHLNNE. A helical transmembrane segment spans residues 384-404; that stretch reads FILLILSAIISYLFILIQFGI. At 405–419 the chain is on the extracellular side; the sequence is TGGFEASEDIKNRFD.

The protein belongs to the insect chemoreceptor superfamily. Gustatory receptor (GR) family. Gr93a subfamily. In larvae, is expressed in neurons of the dorsal pharyngeal sense organs.

Its subcellular location is the cell membrane. In terms of biological role, gustatory receptor required for response to the bitter in taste neurons. Gr93a cells respond to bitter compounds such as caffeine. Flies avoid bitter substances, suggesting that Gr93a neuron activity is sufficient to mediate avoidance behavior. The protein is Gustatory receptor for bitter taste 93a (Gr93a) of Drosophila melanogaster (Fruit fly).